We begin with the raw amino-acid sequence, 1221 residues long: Phosphoenolpyruvate carboxylase 2 (1221 aa).

Histidine 156 is an active-site residue. Disordered stretches follow at residues 443-588 and 642-661; these read TAAE…DPTF and REPAGEAHGGVGAGGGGGGG. Low complexity-rich tracts occupy residues 503 to 513 and 550 to 564; these read TTTATAAAAAA and PFREAANAAMSTAAS. Composition is skewed to gly residues over residues 565–575 and 648–661; these read GGAGGGGGGGA and AHGGVGAGGGGGGG. Lysine 886 is a catalytic residue.

The protein belongs to the PEPCase type 1 family. Mg(2+) serves as cofactor.

The protein resides in the cytoplasm. It catalyses the reaction oxaloacetate + phosphate = phosphoenolpyruvate + hydrogencarbonate. Its function is as follows. Through the carboxylation of phosphoenolpyruvate (PEP) it forms oxaloacetate, a four-carbon dicarboxylic acid source for the tricarboxylic acid cycle. The sequence is that of Phosphoenolpyruvate carboxylase 2 from Chlamydomonas reinhardtii (Chlamydomonas smithii).